The chain runs to 281 residues: CDAN1-interacting nuclease 1 (281 aa).

Thr114 is subject to Phosphothreonine.

Its subcellular location is the nucleus. The protein localises to the cytoplasm. In terms of biological role, plays a role in erythroid cell differentiation. This chain is CDAN1-interacting nuclease 1, found in Mus musculus (Mouse).